Here is a 147-residue protein sequence, read N- to C-terminus: Nitric oxide reductase subunit C (147 aa).

Residues 13–29 (VFYGGSLFFIAVFVGLT) form a helical; Signal-anchor membrane-spanning segment. Heme c is bound by residues Cys-59, Cys-62, and His-63.

Heterodimer of cytochromes b (large subunit) and c (small subunit).

Its subcellular location is the cell membrane. Its function is as follows. Component of the anaerobic respiratory chain that transforms nitrate to dinitrogen (denitrification). The polypeptide is Nitric oxide reductase subunit C (norC) (Cereibacter sphaeroides (strain ATCC 17025 / ATH 2.4.3) (Rhodobacter sphaeroides)).